The chain runs to 115 residues: Peptidyl-tRNA hydrolase (115 aa).

This sequence belongs to the PTH2 family.

The protein localises to the cytoplasm. The catalysed reaction is an N-acyl-L-alpha-aminoacyl-tRNA + H2O = an N-acyl-L-amino acid + a tRNA + H(+). Functionally, the natural substrate for this enzyme may be peptidyl-tRNAs which drop off the ribosome during protein synthesis. The sequence is that of Peptidyl-tRNA hydrolase from Methanocaldococcus jannaschii (strain ATCC 43067 / DSM 2661 / JAL-1 / JCM 10045 / NBRC 100440) (Methanococcus jannaschii).